We begin with the raw amino-acid sequence, 124 residues long: Ribonuclease VapC32 (124 aa).

In terms of domain architecture, PINc spans 2 to 112; sequence ILVDTSVWIE…TRDKRLKAAC (111 aa). Asp5 and Asp86 together coordinate Mg(2+).

It belongs to the PINc/VapC protein family. It depends on Mg(2+) as a cofactor.

Toxic component of a type II toxin-antitoxin (TA) system. An RNase. Its toxic effect is neutralized by coexpression with cognate antitoxin VapB32. This is Ribonuclease VapC32 from Mycobacterium tuberculosis (strain CDC 1551 / Oshkosh).